The primary structure comprises 206 residues: Outer-membrane lipoprotein LolB (206 aa).

The first 21 residues, 1 to 21, serve as a signal peptide directing secretion; sequence MHERNYAVFRLLPLASLLLAA. A lipid anchor (N-palmitoyl cysteine) is attached at C22. The S-diacylglycerol cysteine moiety is linked to residue C22.

This sequence belongs to the LolB family. Monomer.

The protein resides in the cell outer membrane. Functionally, plays a critical role in the incorporation of lipoproteins in the outer membrane after they are released by the LolA protein. The chain is Outer-membrane lipoprotein LolB from Sodalis glossinidius (strain morsitans).